The primary structure comprises 417 residues: Chaperone SurA (417 aa).

Residues 1–12 (MGAALLCSFAHA) form the signal peptide. PpiC domains are found at residues 163 to 264 (SEEY…KLEE) and 273 to 372 (RDEV…QVLG).

It localises to the periplasm. The catalysed reaction is [protein]-peptidylproline (omega=180) = [protein]-peptidylproline (omega=0). Chaperone involved in the correct folding and assembly of outer membrane proteins. Recognizes specific patterns of aromatic residues and the orientation of their side chains, which are found more frequently in integral outer membrane proteins. May act in both early periplasmic and late outer membrane-associated steps of protein maturation. This is Chaperone SurA from Pseudomonas aeruginosa (strain ATCC 15692 / DSM 22644 / CIP 104116 / JCM 14847 / LMG 12228 / 1C / PRS 101 / PAO1).